Consider the following 196-residue polypeptide: MASSKELIEENCYVALTHEHLDAKVMMDKVRSPKAGAIVLFAGTTRDNFGGKPVKELQYTSYEPRALQSMLSICKTILHKHSLTSIAMIHRLGVVPIGEESILITVSSPHRQAAWRAGEEALEECKEKVEVWKKEEFGGEEGGIWRANRDGAVGERVDEDEEKKKPDMGPHGPILRPSRPGERGHGPVVRNHQLGS.

Residues 110–111 (HR), Lys-126, and 133–135 (KKE) contribute to the substrate site. Positions 142–196 (GGIWRANRDGAVGERVDEDEEKKKPDMGPHGPILRPSRPGERGHGPVVRNHQLGS) are disordered. Over residues 147–168 (ANRDGAVGERVDEDEEKKKPDM) the composition is skewed to basic and acidic residues.

Belongs to the MoaE family. MOCS2B subfamily. Heterotetramer; composed of 2 small (MOCS2A) and 2 large (MOCS2B) subunits.

It is found in the cytoplasm. The catalysed reaction is 2 [molybdopterin-synthase sulfur-carrier protein]-C-terminal-Gly-aminoethanethioate + cyclic pyranopterin phosphate + H2O = molybdopterin + 2 [molybdopterin-synthase sulfur-carrier protein]-C-terminal Gly-Gly + 2 H(+). The protein operates within cofactor biosynthesis; molybdopterin biosynthesis. Its function is as follows. Catalytic subunit of the molybdopterin synthase complex, a complex that catalyzes the conversion of precursor Z into molybdopterin. Acts by mediating the incorporation of 2 sulfur atoms from thiocarboxylated MOCS2A into precursor Z to generate a dithiolene group. The sequence is that of Molybdopterin synthase catalytic subunit from Sclerotinia sclerotiorum (strain ATCC 18683 / 1980 / Ss-1) (White mold).